The primary structure comprises 454 residues: Aquaporin-7 (454 aa).

Topologically, residues 1–71 (MNINEPRDGG…LHLHNKTRNH (71 aa)) are cytoplasmic. A helical membrane pass occupies residues 72–92 (FVATVAEFAGTTLFLFFAFSG). Topologically, residues 93–115 (TQVALLATPANDSNVVGTPSNPA) are extracellular. Asparagine 103 is a glycosylation site (N-linked (GlcNAc...) asparagine). The chain crosses the membrane as a helical span at residues 116–136 (QLLYVSLCFGFSLAVNAWVFF). Residues 137 to 163 (RISGGLFNPAVTMGMCIVGALPYFRGL) lie on the Cytoplasmic side of the membrane. Positions 144–146 (NPA) match the NPA 1 motif. The helical transmembrane segment at 164–184 (LLIFAQIIGGIAAAAIVSALF) threads the bilayer. Over 185–202 (PGPITFRTSLGGGTSIVQ) the chain is Extracellular. The helical transmembrane segment at 203-223 (GLFIEMFLTAELVFTIFMLAA) threads the bilayer. The Cytoplasmic segment spans residues 224-229 (EKHKGT). A helical membrane pass occupies residues 230–250 (FIAPIGIGLSLFIAELTGVYF). The Extracellular segment spans residues 251–274 (TGGSVNPARSFGPSVVSGQFTGYH). The short motif at 256–258 (NPA) is the NPA 2 element. A helical membrane pass occupies residues 275-295 (WIYWVGPILGAILASAFYKFI). The Cytoplasmic segment spans residues 296 to 454 (KMLEYETANP…ENLRDNTHNN (159 aa)). The disordered stretch occupies residues 343-454 (GASHVHENGN…ENLRDNTHNN (112 aa)).

The protein belongs to the MIP/aquaporin (TC 1.A.8) family.

Its subcellular location is the membrane. It catalyses the reaction H2O(in) = H2O(out). Functionally, water channel required to facilitate the transport of water across membranes. Involved in conidiation. This is Aquaporin-7 from Botryotinia fuckeliana (strain B05.10) (Noble rot fungus).